A 200-amino-acid polypeptide reads, in one-letter code: Recombination protein RecR (200 aa).

The C4-type zinc finger occupies 58-75 (CSTCFCLKNLPESNCEFC). The 96-residue stretch at 82 to 177 (STLCIVATPK…SISRLALGLP (96 aa)) folds into the Toprim domain.

The protein belongs to the RecR family.

Its function is as follows. May play a role in DNA repair. It seems to be involved in an RecBC-independent recombinational process of DNA repair. It may act with RecF and RecO. The sequence is that of Recombination protein RecR from Chlamydia caviae (strain ATCC VR-813 / DSM 19441 / 03DC25 / GPIC) (Chlamydophila caviae).